Consider the following 535-residue polypeptide: Probable acyl-activating enzyme 22 (535 aa).

Belongs to the ATP-dependent AMP-binding enzyme family.

Functionally, may act as an acid--thiol ligase that activates carboxylic acids by forming acyl-CoAs. In Arabidopsis thaliana (Mouse-ear cress), this protein is Probable acyl-activating enzyme 22 (AEE22).